The chain runs to 317 residues: MRSCFCVRRSRDPPPPQPPPPQRGTDQATMPEVKELSEALPETPMDPITGVGVVASRNRAPTGYDVVAQTADGVDADLWKDGLFKSKVTRYLCFTRSFSKENSHLGNVLVDMKLIDVKDTLPVGFIPIQETVDTQEVVFRKKRLCIKFIPRDSTEAAICDIRIMGRTKQAPPQYTFIGELNSMGIWYRMGRVPRNHDSSQPTTPSQSSASSTPAPNLPRHISLTLPATFRGRNNTSTDYEYQLSNLYAISAMDGVPFMISEKFSCIPESMQPFDLLGITIKSLAEIEKEYEYSFRTEQSAAARLPPSPTRCQQIPQS.

The interval 1-49 (MRSCFCVRRSRDPPPPQPPPPQRGTDQATMPEVKELSEALPETPMDPIT) is disordered. Residues 13-22 (PPPPQPPPPQ) are compositionally biased toward pro residues. The region spanning 45–191 (MDPITGVGVV…SMGIWYRMGR (147 aa)) is the MABP domain. Ser-99 bears the Phosphoserine mark. Thr-120, Thr-202, and Thr-203 each carry phosphothreonine. Residues 193 to 218 (PRNHDSSQPTTPSQSSASSTPAPNLP) form a disordered region. The segment covering 198–214 (SSQPTTPSQSSASSTPA) has biased composition (low complexity). Ser-222 is modified (phosphoserine). In terms of domain architecture, UMA spans 252–301 (MDGVPFMISEKFSCIPESMQPFDLLGITIKSLAEIEKEYEYSFRTEQSAA). The disordered stretch occupies residues 297–317 (EQSAAARLPPSPTRCQQIPQS). Position 307 is a phosphoserine (Ser-307).

It belongs to the MVB12 family. In terms of assembly, component of the ESCRT-I complex (endosomal sorting complex required for transport I) which consists of TSG101, VPS28, a VPS37 protein (VPS37A to -D) and MVB12A or MVB12B in a 1:1:1:1 stoichiometry. Interacts with TSG101; the association appears to be mediated by the TSG101-VPS37 binary subcomplex. Interacts with VPS28. Interacts with VPS37B; the association appears to be mediated by the TSG101-VPS37 binary subcomplex. Interacts with VPS37C; the association appears to be mediated by the TSG101-VPS37 binary subcomplex.

It is found in the endosome. The protein localises to the late endosome membrane. Component of the ESCRT-I complex, a regulator of vesicular trafficking process. Required for the sorting of endocytic ubiquitinated cargos into multivesicular bodies. The chain is Multivesicular body subunit 12B (Mvb12b) from Mus musculus (Mouse).